The primary structure comprises 384 residues: Tetraacyldisaccharide 4'-kinase (384 aa).

Residue 72-79 (TAGGTGKT) participates in ATP binding.

It belongs to the LpxK family.

It catalyses the reaction a lipid A disaccharide + ATP = a lipid IVA + ADP + H(+). Its pathway is glycolipid biosynthesis; lipid IV(A) biosynthesis; lipid IV(A) from (3R)-3-hydroxytetradecanoyl-[acyl-carrier-protein] and UDP-N-acetyl-alpha-D-glucosamine: step 6/6. In terms of biological role, transfers the gamma-phosphate of ATP to the 4'-position of a tetraacyldisaccharide 1-phosphate intermediate (termed DS-1-P) to form tetraacyldisaccharide 1,4'-bis-phosphate (lipid IVA). In Halothermothrix orenii (strain H 168 / OCM 544 / DSM 9562), this protein is Tetraacyldisaccharide 4'-kinase.